The following is a 111-amino-acid chain: uncharacterized protein (111 aa).

2 consecutive transmembrane segments (helical) span residues 29–49 (LLNFFIFFSLHLCALFLATAV) and 52–72 (ACFACFVLFRHAILLLFYLLA).

It is found in the membrane. This is an uncharacterized protein from Saccharomyces cerevisiae (strain ATCC 204508 / S288c) (Baker's yeast).